A 135-amino-acid polypeptide reads, in one-letter code: Large ribosomal subunit protein uL16c (135 aa).

Belongs to the universal ribosomal protein uL16 family. Part of the 50S ribosomal subunit.

It is found in the plastid. Its subcellular location is the chloroplast. This is Large ribosomal subunit protein uL16c from Olimarabidopsis pumila (Dwarf rocket).